A 278-amino-acid chain; its full sequence is Large ribosomal subunit protein uL2 (278 aa).

Disordered stretches follow at residues 33 to 57 (LIRP…KGGG) and 224 to 278 (VVMN…GKKR). Positions 45-57 (AHGRITTRHKGGG) are enriched in basic residues. The segment covering 253-268 (PEGRTRKPNKASDKLI) has biased composition (basic and acidic residues). A compositionally biased stretch (basic residues) spans 269 to 278 (VRRRRTGKKR).

The protein belongs to the universal ribosomal protein uL2 family. As to quaternary structure, part of the 50S ribosomal subunit. Forms a bridge to the 30S subunit in the 70S ribosome.

Its function is as follows. One of the primary rRNA binding proteins. Required for association of the 30S and 50S subunits to form the 70S ribosome, for tRNA binding and peptide bond formation. It has been suggested to have peptidyltransferase activity; this is somewhat controversial. Makes several contacts with the 16S rRNA in the 70S ribosome. In Mycobacteroides abscessus (strain ATCC 19977 / DSM 44196 / CCUG 20993 / CIP 104536 / JCM 13569 / NCTC 13031 / TMC 1543 / L948) (Mycobacterium abscessus), this protein is Large ribosomal subunit protein uL2.